The chain runs to 327 residues: Malate dehydrogenase (327 aa).

NAD(+)-binding positions include 20-25 (GAGRVG) and aspartate 44. The substrate site is built by arginine 93 and arginine 99. NAD(+) contacts are provided by residues asparagine 106 and 129 to 131 (VTN). Residues asparagine 131 and arginine 162 each contribute to the substrate site. Catalysis depends on histidine 186, which acts as the Proton acceptor.

It belongs to the LDH/MDH superfamily. MDH type 3 family.

It catalyses the reaction (S)-malate + NAD(+) = oxaloacetate + NADH + H(+). Catalyzes the reversible oxidation of malate to oxaloacetate. This chain is Malate dehydrogenase, found in Nostoc punctiforme (strain ATCC 29133 / PCC 73102).